The following is a 316-amino-acid chain: Tyrosine recombinase XerC (316 aa).

The Core-binding (CB) domain maps to 11–97; it reads SGLRKPLDQF…SLRSFFDFLI (87 aa). Residues 118–298 enclose the Tyr recombinase domain; the sequence is PLPKNLDVDE…DFQHLADVYD (181 aa). Residues R157, K181, H250, R253, and H276 contribute to the active site. The O-(3'-phospho-DNA)-tyrosine intermediate role is filled by Y285.

This sequence belongs to the 'phage' integrase family. XerC subfamily. Forms a cyclic heterotetrameric complex composed of two molecules of XerC and two molecules of XerD.

Its subcellular location is the cytoplasm. Site-specific tyrosine recombinase, which acts by catalyzing the cutting and rejoining of the recombining DNA molecules. The XerC-XerD complex is essential to convert dimers of the bacterial chromosome into monomers to permit their segregation at cell division. It also contributes to the segregational stability of plasmids. The chain is Tyrosine recombinase XerC from Vibrio vulnificus (strain CMCP6).